The following is a 408-amino-acid chain: Multifunctional CCA protein (408 aa).

2 residues coordinate ATP: glycine 8 and arginine 11. Residues glycine 8 and arginine 11 each coordinate CTP. 2 residues coordinate Mg(2+): aspartate 21 and aspartate 23. ATP-binding residues include arginine 91, arginine 137, and arginine 140. Arginine 91, arginine 137, and arginine 140 together coordinate CTP. The HD domain occupies 228-329; it reads TGVHVLSVLE…LELLQSFDVY (102 aa).

Belongs to the tRNA nucleotidyltransferase/poly(A) polymerase family. Bacterial CCA-adding enzyme type 1 subfamily. In terms of assembly, monomer. Can also form homodimers and oligomers. It depends on Mg(2+) as a cofactor. Ni(2+) is required as a cofactor.

It carries out the reaction a tRNA precursor + 2 CTP + ATP = a tRNA with a 3' CCA end + 3 diphosphate. It catalyses the reaction a tRNA with a 3' CCA end + 2 CTP + ATP = a tRNA with a 3' CCACCA end + 3 diphosphate. In terms of biological role, catalyzes the addition and repair of the essential 3'-terminal CCA sequence in tRNAs without using a nucleic acid template. Adds these three nucleotides in the order of C, C, and A to the tRNA nucleotide-73, using CTP and ATP as substrates and producing inorganic pyrophosphate. tRNA 3'-terminal CCA addition is required both for tRNA processing and repair. Also involved in tRNA surveillance by mediating tandem CCA addition to generate a CCACCA at the 3' terminus of unstable tRNAs. While stable tRNAs receive only 3'-terminal CCA, unstable tRNAs are marked with CCACCA and rapidly degraded. This is Multifunctional CCA protein from Pseudomonas syringae pv. syringae (strain B728a).